The primary structure comprises 232 residues: uncharacterized protein (232 aa).

One can recognise an Autotransporter domain in the interval 1 to 232; the sequence is MIIKKSGGRW…LYTMGVSARF (232 aa).

This is an uncharacterized protein from Escherichia coli (strain K12).